Reading from the N-terminus, the 468-residue chain is 6-phospho-beta-galactosidase (468 aa).

Glutamine 19, histidine 116, asparagine 159, glutamate 160, and asparagine 297 together coordinate D-galactose 6-phosphate. Glutamate 160 serves as the catalytic Proton donor. The active-site Nucleophile is glutamate 375. D-galactose 6-phosphate is bound by residues serine 428, tryptophan 429, lysine 435, and tyrosine 437.

It belongs to the glycosyl hydrolase 1 family.

It catalyses the reaction a 6-phospho-beta-D-galactoside + H2O = D-galactose 6-phosphate + an alcohol. The protein operates within carbohydrate metabolism; lactose degradation; D-galactose 6-phosphate and beta-D-glucose from lactose 6-phosphate: step 1/1. The chain is 6-phospho-beta-galactosidase from Streptococcus pyogenes serotype M4 (strain MGAS10750).